The primary structure comprises 103 residues: Large ribosomal subunit protein bL21 (103 aa).

It belongs to the bacterial ribosomal protein bL21 family. Part of the 50S ribosomal subunit. Contacts protein L20.

This protein binds to 23S rRNA in the presence of protein L20. The protein is Large ribosomal subunit protein bL21 of Paraburkholderia phytofirmans (strain DSM 17436 / LMG 22146 / PsJN) (Burkholderia phytofirmans).